A 302-amino-acid chain; its full sequence is GTPase Era (302 aa).

The region spanning 10–178 (RCGYVAIVGR…EAQIAKHLPE (169 aa)) is the Era-type G domain. The G1 stretch occupies residues 18 to 25 (GRPNVGKS). A GTP-binding site is contributed by 18-25 (GRPNVGKS). The G2 stretch occupies residues 44–48 (QTTRH). The tract at residues 65–68 (DTPG) is G3. Residues 65-69 (DTPGM) and 127-130 (NKTD) each bind GTP. The interval 127-130 (NKTD) is G4. A G5 region spans residues 157-159 (ISA). Positions 201–285 (VREKIMRQLG…MLNLWVKVKG (85 aa)) constitute a KH type-2 domain.

It belongs to the TRAFAC class TrmE-Era-EngA-EngB-Septin-like GTPase superfamily. Era GTPase family. As to quaternary structure, monomer.

Its subcellular location is the cytoplasm. The protein localises to the cell inner membrane. In terms of biological role, an essential GTPase that binds both GDP and GTP, with rapid nucleotide exchange. Plays a role in 16S rRNA processing and 30S ribosomal subunit biogenesis and possibly also in cell cycle regulation and energy metabolism. The polypeptide is GTPase Era (Pseudomonas putida (strain ATCC 47054 / DSM 6125 / CFBP 8728 / NCIMB 11950 / KT2440)).